We begin with the raw amino-acid sequence, 424 residues long: Light-independent protochlorophyllide reductase subunit N (424 aa).

[4Fe-4S] cluster contacts are provided by cysteine 27, cysteine 52, and cysteine 113.

The protein belongs to the BchN/ChlN family. In terms of assembly, protochlorophyllide reductase is composed of three subunits; BchL, BchN and BchB. Forms a heterotetramer of two BchB and two BchN subunits. [4Fe-4S] cluster serves as cofactor.

It carries out the reaction chlorophyllide a + oxidized 2[4Fe-4S]-[ferredoxin] + 2 ADP + 2 phosphate = protochlorophyllide a + reduced 2[4Fe-4S]-[ferredoxin] + 2 ATP + 2 H2O. The protein operates within porphyrin-containing compound metabolism; bacteriochlorophyll biosynthesis (light-independent). Functionally, component of the dark-operative protochlorophyllide reductase (DPOR) that uses Mg-ATP and reduced ferredoxin to reduce ring D of protochlorophyllide (Pchlide) to form chlorophyllide a (Chlide). This reaction is light-independent. The NB-protein (BchN-BchB) is the catalytic component of the complex. This chain is Light-independent protochlorophyllide reductase subunit N, found in Halorhodospira halophila (strain DSM 244 / SL1) (Ectothiorhodospira halophila (strain DSM 244 / SL1)).